The sequence spans 253 residues: Ribosome maturation factor RimP (253 aa).

The span at 186–199 (RRGKAAEREKKRDL) shows a compositional bias: basic and acidic residues. The tract at residues 186-253 (RRGKAAEREK…RARRGEIDPD (68 aa)) is disordered. The span at 201–216 (LAPPLAPHAKPAAQAK) shows a compositional bias: low complexity. Over residues 240–253 (LAADRARRGEIDPD) the composition is skewed to basic and acidic residues.

Belongs to the RimP family.

The protein localises to the cytoplasm. In terms of biological role, required for maturation of 30S ribosomal subunits. The polypeptide is Ribosome maturation factor RimP (Bradyrhizobium sp. (strain BTAi1 / ATCC BAA-1182)).